Here is a 203-residue protein sequence, read N- to C-terminus: Outer-membrane lipoprotein LolB (203 aa).

An N-terminal signal peptide occupies residues 1–17; the sequence is MNRLFRLLPLASLVLTA. C18 is lipidated: N-palmitoyl cysteine. C18 carries the S-diacylglycerol cysteine lipid modification.

The protein belongs to the LolB family. As to quaternary structure, monomer.

Its subcellular location is the cell outer membrane. Functionally, plays a critical role in the incorporation of lipoproteins in the outer membrane after they are released by the LolA protein. The polypeptide is Outer-membrane lipoprotein LolB (Klebsiella pneumoniae (strain 342)).